We begin with the raw amino-acid sequence, 486 residues long: Heme A synthase COX15 (486 aa).

The N-terminal 33 residues, 1–33, are a transit peptide targeting the mitochondrion; the sequence is MLFRNIEVGRQAAKLLTRTSSRLAWQSIGASRN. Over 34-85 the chain is Mitochondrial matrix; sequence ISTIRQQIRKTQLYNFKKTVSIRPFSLSSPVFKPHVASESNPIESRLKTSKN. A helical membrane pass occupies residues 86–106; sequence VAYWLIGTSGLVFGIVVLGGL. Over 107–170 the chain is Mitochondrial intermembrane; sequence TRLTESGLSI…FIFFMEWIHR (64 aa). Histidine 169 is a binding site for heme o. The helical transmembrane segment at 171–191 threads the bilayer; it reads LWGRAIGAVFILPAVYFAVSK. The Mitochondrial matrix segment spans residues 192–200; that stretch reads KTSGHVNKR. A helical membrane pass occupies residues 201–221; that stretch reads LFGLAGLLGLQGFVGWWMVKS. The Mitochondrial intermembrane portion of the chain corresponds to 222–243; that stretch reads GLDQEQLDARKSKPTVSQYRLT. A helical membrane pass occupies residues 244–264; the sequence is THLGTAFFLYMGMLWTGLEIL. Histidine 245 is a heme o binding site. At 265 to 293 the chain is on the mitochondrial matrix side; the sequence is RECKWIKNPVQAISLFKKLDNPAIGPMRK. Residues 294 to 314 form a helical membrane-spanning segment; it reads ISLALLAVSFLTAMSGGMVAG. At 315–364 the chain is on the mitochondrial intermembrane side; sequence LDAGWVYNTWPKMGERWFPSSRELMDENFCRREDKKDLWWRNLLENPVTV. A helical transmembrane segment spans residues 365–387; the sequence is QLVHRTCAYVAFTSVLAAHMYAI. Residue histidine 368 participates in heme b binding. Residues 388–402 lie on the Mitochondrial matrix side of the membrane; it reads KKKAVIPRNAMTSLH. The chain crosses the membrane as a helical span at residues 403-423; sequence VMMGVVTLQATLGILTILYLV. Position 424 (proline 424) is a topological domain, mitochondrial intermembrane. Residues 425-445 traverse the membrane as a helical segment; it reads ISLASIHQAGALALLTSSLVF. Histidine 431 provides a ligand contact to heme b. Residues 446-486 are Mitochondrial matrix-facing; it reads ASQLRKPRAPMRNVIITLPHSSKVTSGKILSEASKLASKPL.

It belongs to the COX15/CtaA family. Type 2 subfamily. Forms 200-350 kDa oligomeric complexes independent on heme binding. In addition to form homooligomeric complexes, a portion also associates with the mitochondrial respiratory supercomplexes. Interacts with CcO assembly factors PET117, SHY1, COA3 and COA1, CcO subunit COX13 and cytochrome b-c1 subunit COR1. The cofactor is heme b.

The protein resides in the mitochondrion inner membrane. The enzyme catalyses Fe(II)-heme o + 2 A + H2O = Fe(II)-heme a + 2 AH2. The protein operates within porphyrin-containing compound metabolism; heme A biosynthesis; heme A from heme O: step 1/1. Functionally, catalyzes the second reaction in the biosynthesis of heme A, a prosthetic group of mitochondrial cytochrome c oxidase (CcO). Heme A is synthesized from heme B by two sequential enzymatic reactions catalyzed by heme O synthase (HOS/COX10) and heme A synthase (HAS/COX15). HAS catalyzes the conversion of heme O to heme A by two successive hydroxylations of the methyl group at C8, in a reaction that involves matrix ferredoxin YAH1 and ferredoxin reductase ARH1. The first hydroxylation forms heme I, the second hydroxylation results in an unstable dihydroxymethyl group, which spontaneously dehydrates, resulting in the formyl group of heme A. May also play a secondary role in CcO assembly. Plays a role in the maturation of COX1, the heme A-containing structural CcO subunit, possibly by interacting with the COX1-containing sub-assembly complexes that form prior to heme A insertion. May also positively regulate the upstream enzymatic reaction, farnesylation of heme B by HOS/COX10. This chain is Heme A synthase COX15, found in Saccharomyces cerevisiae (strain ATCC 204508 / S288c) (Baker's yeast).